A 379-amino-acid polypeptide reads, in one-letter code: tRNA-specific 2-thiouridylase MnmA (379 aa).

ATP-binding positions include 9–16 (AMSGGVDS) and Met-35. Residues 94-96 (NPD) form an interaction with target base in tRNA region. Cys-99 serves as the catalytic Nucleophile. Cys-99 and Cys-195 are oxidised to a cystine. Gly-123 contributes to the ATP binding site. The segment at 145 to 147 (KDQ) is interaction with tRNA. Residue Cys-195 is the Cysteine persulfide intermediate of the active site. Residues 307 to 308 (RY) are interaction with tRNA.

Belongs to the MnmA/TRMU family.

It is found in the cytoplasm. The enzyme catalyses S-sulfanyl-L-cysteinyl-[protein] + uridine(34) in tRNA + AH2 + ATP = 2-thiouridine(34) in tRNA + L-cysteinyl-[protein] + A + AMP + diphosphate + H(+). In terms of biological role, catalyzes the 2-thiolation of uridine at the wobble position (U34) of tRNA, leading to the formation of s(2)U34. In Xylella fastidiosa (strain 9a5c), this protein is tRNA-specific 2-thiouridylase MnmA.